The primary structure comprises 268 residues: tRNA threonylcarbamoyladenosine dehydratase (268 aa).

Residues 237–257 (GFGAATMVTATFGFVAVSHAL) traverse the membrane as a helical segment.

Belongs to the HesA/MoeB/ThiF family. As to quaternary structure, interacts with CsdE.

The protein resides in the membrane. Its function is as follows. Catalyzes the ATP-dependent dehydration of threonylcarbamoyladenosine at position 37 (t(6)A37) to form cyclic t(6)A37 (ct(6)A37) in tRNAs that read codons beginning with adenine. TcdA is also part of a sulfur transfer pathway; is able to accept sulfur from CsdA directly in vitro, but CsdE might act as the sulfur donor in vivo. In Escherichia coli (strain K12), this protein is tRNA threonylcarbamoyladenosine dehydratase (tcdA).